Here is a 289-residue protein sequence, read N- to C-terminus: Toxin tox21A (289 aa).

Residues 1–14 (MNLYFLFFISTILA) form the signal peptide. Positions 15-27 (AKPFNSFNKTSLI) are excised as a propeptide. Residues 270–289 (DKDITVHENAGDPKSDSRRC) are disordered.

Post-translationally, contains several disulfide bonds. Posterior glands which appear to be connected with the stylet through a series of ducts.

The protein resides in the secreted. In terms of biological role, has contracting-paralyzing activity in insect larvae. This Pyemotes tritici (Straw itch mite) protein is Toxin tox21A.